The sequence spans 476 residues: Glutamate--tRNA ligase (476 aa).

The short motif at 9–19 is the 'HIGH' region element; that stretch reads PSPTGKLHIGT. Over residues 109–129 the composition is skewed to basic and acidic residues; that stretch reads REEQKSRNKPPRYDNRHRSLS. Positions 109 to 133 are disordered; that stretch reads REEQKSRNKPPRYDNRHRSLSTEEE. The 'KMSKS' region signature appears at 248–252; sequence KLSKR. Position 251 (K251) interacts with ATP.

It belongs to the class-I aminoacyl-tRNA synthetase family. Glutamate--tRNA ligase type 1 subfamily. In terms of assembly, monomer.

It localises to the cytoplasm. It catalyses the reaction tRNA(Glu) + L-glutamate + ATP = L-glutamyl-tRNA(Glu) + AMP + diphosphate. Its function is as follows. Catalyzes the attachment of glutamate to tRNA(Glu) in a two-step reaction: glutamate is first activated by ATP to form Glu-AMP and then transferred to the acceptor end of tRNA(Glu). The polypeptide is Glutamate--tRNA ligase (Prochlorococcus marinus (strain MIT 9211)).